The sequence spans 264 residues: Thymidylate synthase (264 aa).

Residue Arg-21 participates in dUMP binding. His-51 contacts (6R)-5,10-methylene-5,6,7,8-tetrahydrofolate. 126–127 (RR) serves as a coordination point for dUMP. Cys-146 acts as the Nucleophile in catalysis. DUMP contacts are provided by residues 166 to 169 (RSAD), Asn-177, and 207 to 209 (HLY). Asp-169 serves as a coordination point for (6R)-5,10-methylene-5,6,7,8-tetrahydrofolate. Ala-263 is a (6R)-5,10-methylene-5,6,7,8-tetrahydrofolate binding site.

It belongs to the thymidylate synthase family. Bacterial-type ThyA subfamily. In terms of assembly, homodimer.

It is found in the cytoplasm. The enzyme catalyses dUMP + (6R)-5,10-methylene-5,6,7,8-tetrahydrofolate = 7,8-dihydrofolate + dTMP. It functions in the pathway pyrimidine metabolism; dTTP biosynthesis. Catalyzes the reductive methylation of 2'-deoxyuridine-5'-monophosphate (dUMP) to 2'-deoxythymidine-5'-monophosphate (dTMP) while utilizing 5,10-methylenetetrahydrofolate (mTHF) as the methyl donor and reductant in the reaction, yielding dihydrofolate (DHF) as a by-product. This enzymatic reaction provides an intracellular de novo source of dTMP, an essential precursor for DNA biosynthesis. This Paramagnetospirillum magneticum (strain ATCC 700264 / AMB-1) (Magnetospirillum magneticum) protein is Thymidylate synthase.